Reading from the N-terminus, the 394-residue chain is Tubby-like F-box protein 2 (394 aa).

Residues 21–44 form a disordered region; sequence SKRSWSKSSHIAPDQTTPPLDNIP. Positions 26 to 44 are enriched in polar residues; sequence SKSSHIAPDQTTPPLDNIP. The 56-residue stretch at 46–101 folds into the F-box domain; sequence SPWASLPPELLHDIIWRVEESETAWPARAAVVSCASVCKSWRGITMEIVRIPEQCG. Disordered regions lie at residues 200 to 225 and 268 to 297; these read ASST…PTNS and IEEE…PSLR.

Belongs to the TUB family. As to expression, ubiquitous.

The sequence is that of Tubby-like F-box protein 2 from Arabidopsis thaliana (Mouse-ear cress).